We begin with the raw amino-acid sequence, 943 residues long: Tyrosine-protein kinase transmembrane receptor ROR2 (943 aa).

The signal sequence occupies residues Met-1–Gly-33. The Extracellular segment spans residues Glu-34 to Gly-403. Positions Pro-55–Thr-145 constitute an Ig-like C2-type domain. N-linked (GlcNAc...) asparagine glycosylation occurs at Asn-70. Intrachain disulfides connect Cys-83-Cys-135, Cys-174-Cys-239, Cys-182-Cys-232, Cys-223-Cys-264, Cys-252-Cys-300, Cys-256-Cys-286, Cys-316-Cys-394, Cys-337-Cys-377, and Cys-365-Cys-389. Positions His-169–Ile-303 constitute an FZ domain. Asn-188 carries N-linked (GlcNAc...) asparagine glycosylation. The Kringle domain occupies Cys-316–Cys-394. A glycan (N-linked (GlcNAc...) asparagine) is linked at Asn-318. Residues Ile-404–Leu-424 form a helical membrane-spanning segment. The Cytoplasmic segment spans residues Val-425–Ala-943. Sulfoserine; partial is present on residues Ser-469 and Ser-471. A Protein kinase domain is found at Val-473–Leu-746. ATP-binding positions include Leu-479 to Val-487 and Lys-507. Residue Asp-615 is the Proton acceptor of the active site. Tyr-646 carries the phosphotyrosine; by autocatalysis modification. Disordered regions lie at residues Ser-757 to Phe-796 and Gln-850 to Thr-931. Composition is skewed to low complexity over residues Ser-765 to Gln-791 and Pro-857 to Gly-872. An Asymmetric dimethylarginine modification is found at Arg-785. Polar residues predominate over residues Tyr-873 to Met-883.

The protein belongs to the protein kinase superfamily. Tyr protein kinase family. ROR subfamily. As to quaternary structure, homodimer; promotes osteogenesis. Binds YWHAB. Interacts with WTIP. Interacts with ROR2. Mg(2+) serves as cofactor.

The protein resides in the cell membrane. The enzyme catalyses L-tyrosyl-[protein] + ATP = O-phospho-L-tyrosyl-[protein] + ADP + H(+). Functionally, tyrosine-protein kinase receptor which may be involved in the early formation of the chondrocytes. It seems to be required for cartilage and growth plate development. Phosphorylates YWHAB, leading to induction of osteogenesis and bone formation. In contrast, has also been shown to have very little tyrosine kinase activity in vitro. May act as a receptor for wnt ligand WNT5A which may result in the inhibition of WNT3A-mediated signaling. This Homo sapiens (Human) protein is Tyrosine-protein kinase transmembrane receptor ROR2 (ROR2).